A 32-amino-acid polypeptide reads, in one-letter code: Islet amyloid polypeptide (32 aa).

Belongs to the calcitonin family. As to quaternary structure, can form homodimers. Interacts with IDE and INS. Interaction with INS inhibits homodimerization and fibril formation.

Its subcellular location is the secreted. Its function is as follows. Amylin/IAPP is a glucoregulatory peptide hormone that plays an important role in the regulation of energy homeostasis. Selectively inhibits insulin-stimulated glucose utilization and glycogen deposition in muscle, while not affecting adipocyte glucose metabolism. IAPP function is mediated by the CALCR-RAMPs (AMYRs) receptor complexes. Amylin can also bind CALCR receptor in the absence of RAMPs, although it is more selective for AMYRs. The chain is Islet amyloid polypeptide (IAPP) from Saguinus oedipus (Cotton-top tamarin).